Here is a 164-residue protein sequence, read N- to C-terminus: UPF0114 protein Avin_40830 (164 aa).

4 helical membrane-spanning segments follow: residues Leu15 to Phe35, Leu53 to Val73, Gly103 to Phe125, and Leu136 to Leu156.

This sequence belongs to the UPF0114 family.

It localises to the cell membrane. In Azotobacter vinelandii (strain DJ / ATCC BAA-1303), this protein is UPF0114 protein Avin_40830.